A 265-amino-acid polypeptide reads, in one-letter code: Insulin-like growth factor-binding protein 2-B (265 aa).

The signal sequence occupies residues 1-17 (MSLALLCSLLLVHGSLG). Residues 19–99 (IVFRCPSCTA…IQGLGRCENK (81 aa)) form the IGFBP N-terminal domain. Disulfide bonds link Cys-23–Cys-49, Cys-26–Cys-51, Cys-34–Cys-52, Cys-41–Cys-55, Cys-63–Cys-76, and Cys-70–Cys-96. A compositionally biased stretch (polar residues) spans 107–122 (TNQESAAHSGEVNGTR). Disordered stretches follow at residues 107–128 (TNQESAAHSGEVNGTRSPPMKK) and 144–170 (HHNNKRTRMYNTQDDPKTPHPKQSQCQ). Residues 166 to 248 (QSQCQQELDK…SDKVRGDPNC (83 aa)) enclose the Thyroglobulin type-1 domain. 3 disulfides stabilise this stretch: Cys-169–Cys-203, Cys-214–Cys-225, and Cys-227–Cys-248. Residues 238-265 (SSDKVRGDPNCSQYYGGPELEPPTAQQK) form a disordered region. The Cell attachment site motif lies at 243-245 (RGD).

Interacts with igf2. Interacts with igf1. In terms of tissue distribution, in early embryos, expressed at a low level in most tissues with expression becoming abundant in the liver by 96 hours post-fertilization (hpf). The expression pattern in adults exhibits sexual dimorphism; in adult males expression is limited exclusively to the liver whereas in adult females expression is observed in the liver and other tissues including the gut, kidney, ovary and muscle.

It localises to the secreted. Its function is as follows. IGF-binding proteins prolong the half-life of the IGFs and have been shown to either inhibit or stimulate the growth promoting effects of the IGFs on cell culture. They alter the interaction of IGFs with their cell surface receptors. The polypeptide is Insulin-like growth factor-binding protein 2-B (Danio rerio (Zebrafish)).